A 221-amino-acid chain; its full sequence is MRSQLSLMGKKEGMIHVFDKDGNLVACSVISMSPNVVSQIKVDSTDGYNAIQMGADEISVPEKTLQKRVNKPILGHFKKSGSRVFRTLKEVRVSEDAVNEASLGSEFGLEVFEDVSSVDISGVSKGKGFQGVMKKFGFRGGPKTHGSGFHRHAGSIGMRSTPGRCFPGSKRPSHMGAVNVTIKNLEVIKIDLEKKVLLVKGAIPGPRGSVVVVRRSSRAKA.

This sequence belongs to the universal ribosomal protein uL3 family. In terms of assembly, part of the 50S ribosomal subunit. Forms a cluster with proteins L14 and L19.

In terms of biological role, one of the primary rRNA binding proteins, it binds directly near the 3'-end of the 23S rRNA, where it nucleates assembly of the 50S subunit. This chain is Large ribosomal subunit protein uL3, found in Chlamydia felis (strain Fe/C-56) (Chlamydophila felis).